Consider the following 482-residue polypeptide: Bile acid receptor (482 aa).

Residue Lys-132 forms a Glycyl lysine isopeptide (Lys-Gly) (interchain with G-Cter in SUMO1) linkage. Residues 134–209 constitute a DNA-binding region (nuclear receptor); that stretch reads DELCVVCGDR…MGMLAECLLT (76 aa). The segment at 137–157 adopts an NR C4-type zinc-finger fold; it reads CVVCGDRASGYHYNALTCEGC. Phosphoserine; by PKC/PRKCA is present on residues Ser-145 and Ser-164. Position 167 is an N6-acetyllysine; by EP300 (Lys-167). Residues 173–197 form an NR C4-type zinc finger; that stretch reads CKNGGNCVMDMYMRRKCQECRLRKC. Position 216 is an N6-methyllysine; by SETD7 (Lys-216). Residue Lys-223 is modified to N6-acetyllysine; by EP300. Residues 229–240 are compositionally biased toward basic and acidic residues; sequence AIHEDSEGRDLR. The tract at residues 229 to 253 is disordered; sequence AIHEDSEGRDLRQVTSTTKSCREKT. The NR LBD domain maps to 258–482; that stretch reads DQQNLLHYIM…PLLCEIWDVQ (225 aa). Lys-285 is covalently cross-linked (Glycyl lysine isopeptide (Lys-Gly) (interchain with G-Cter in SUMO1)). Residues Arg-341, Tyr-371, and Tyr-379 each coordinate chenodeoxycholate. At Thr-452 the chain carries Phosphothreonine; by PKC/PRKCZ. His-457 provides a ligand contact to chenodeoxycholate.

The protein belongs to the nuclear hormone receptor family. NR1 subfamily. Heterodimer with RXRA; the heterodimerization enhances the binding affinity for LXXLL motifs from coactivators. Binds DNA predominantly as a heterodimer with RXRA. After activation by agonist binding interacts with coactivators. Interacts with NCOA1, NCOA2, PPARGC1A, CARM1, SETD7, PRMT1, GPS2, SMARCA4 and MED1, EP300 and SMARCD1. Interacts with XRCC5 and XRCC6; decreasing NR1H4/FXR transactivation activity towards ABCB11/BSEP. Interacts with PAGR1 AND NCOA6; indicative for an association with an MLL2/MLL3 complex (ASCOM). In terms of processing, acetylated by EP300. Lys-223 as is the major acetylation site for EP300; the dynamicly regulated acetylation inhibits heterodimerization with RXRA and transactivation activity. Deacetylated by SIRT1. Methylation may increase transactivation of target genes. Post-translationally, phosphorylation by PKC/PRKCA increases transactivation activity by promoting association with PPARGC1A. In terms of processing, sumoylated upon ligand binding.

It localises to the nucleus. Ligand-activated transcription factor. Receptor for bile acids (BAs) such as chenodeoxycholic acid (CDCA), lithocholic acid, deoxycholic acid (DCA) and allocholic acid (ACA). Plays a essential role in BA homeostasis through the regulation of genes involved in BA synthesis, conjugation and enterohepatic circulation. Also regulates lipid and glucose homeostasis and is involved innate immune response. The FXR-RXR heterodimer binds predominantly to farnesoid X receptor response elements (FXREs) containing two inverted repeats of the consensus sequence 5'-AGGTCA-3' in which the monomers are spaced by 1 nucleotide (IR-1) but also to tandem repeat DR1 sites with lower affinity, and can be activated by either FXR or RXR-specific ligands. It is proposed that monomeric nuclear receptors such as NR5A2/LRH-1 bound to coregulatory nuclear responsive element (NRE) halfsites located in close proximity to FXREs modulate transcriptional activity. In the liver activates transcription of the corepressor NR0B2 thereby indirectly inhibiting CYP7A1 and CYP8B1 (involved in BA synthesis) implicating at least in part histone demethylase KDM1A resulting in epigenomic repression, and SLC10A1/NTCP (involved in hepatic uptake of conjugated BAs). Activates transcription of the repressor MAFG (involved in regulation of BA synthesis). Activates transcription of SLC27A5/BACS and BAAT (involved in BA conjugation), ABCB11/BSEP (involved in bile salt export) by directly recruiting histone methyltransferase CARM1, and ABCC2/MRP2 (involved in secretion of conjugated BAs) and ABCB4 (involved in secretion of phosphatidylcholine in the small intestine). Activates transcription of SLC27A5/BACS and BAAT (involved in BA conjugation), ABCB11/BSEP (involved in bile salt export) by directly recruiting histone methyltransferase CARM1, and ABCC2/MRP2 (involved in secretion of conjugated BAs) and ABCB4 (involved in secretion of phosphatidylcholine in the small intestine). In the intestine activates FGF19 expression and secretion leading to hepatic CYP7A1 repression. The function also involves the coordinated induction of hepatic KLB/beta-klotho expression. Regulates transcription of liver UGT2B4 and SULT2A1 involved in BA detoxification; binding to the UGT2B4 promoter seems to imply a monomeric transactivation independent of RXRA. Modulates lipid homeostasis by activating liver NR0B2/SHP-mediated repression of SREBF1 (involved in de novo lipogenesis), expression of PLTP (involved in HDL formation), SCARB1 (involved in HDL hepatic uptake), APOE, APOC1, APOC4, PPARA (involved in beta-oxidation of fatty acids), VLDLR and SDC1 (involved in the hepatic uptake of LDL and IDL remnants), and inhibiting expression of MTTP (involved in VLDL assembly). Increases expression of APOC2 (promoting lipoprotein lipase activity implicated in triglyceride clearance). Transrepresses APOA1 involving a monomeric competition with NR2A1 for binding to a DR1 element. Also reduces triglyceride clearance by inhibiting expression of ANGPTL3 and APOC3 (both involved in inhibition of lipoprotein lipase). Involved in glucose homeostasis by modulating hepatic gluconeogenesis through activation of NR0B2/SHP-mediated repression of respective genes. Modulates glycogen synthesis (inducing phosphorylation of glycogen synthase kinase-3). Modulates glucose-stimulated insulin secretion and is involved in insulin resistance. Involved in intestinal innate immunity. Plays a role in protecting the distal small intestine against bacterial overgrowth and preservation of the epithelial barrier. Down-regulates inflammatory cytokine expression in several types of immune cells including macrophages and mononuclear cells. Mediates trans-repression of TLR4-induced cytokine expression; the function seems to require its sumoylation and prevents N-CoR nuclear receptor corepressor clearance from target genes such as IL1B and NOS2. Involved in the TLR9-mediated protective mechanism in intestinal inflammation. Plays an anti-inflammatory role in liver inflammation; proposed to inhibit pro-inflammatory (but not antiapoptotic) NF-kappa-B signaling. The chain is Bile acid receptor (NR1H4) from Bos taurus (Bovine).